Reading from the N-terminus, the 694-residue chain is Polyribonucleotide nucleotidyltransferase (694 aa).

Positions 485 and 491 each coordinate Mg(2+). The KH domain maps to 552 to 611 (PRIETMQIKPNKIATVIGPGGKQIRQIIEEAGVQIDINDSGLVSISASSPQAIEKAKSII). One can recognise an S1 motif domain in the interval 621-689 (GKIYEGRVTS…EKGQYKLSHK (69 aa)).

It belongs to the polyribonucleotide nucleotidyltransferase family. Mg(2+) serves as cofactor.

The protein localises to the cytoplasm. It catalyses the reaction RNA(n+1) + phosphate = RNA(n) + a ribonucleoside 5'-diphosphate. Involved in mRNA degradation. Catalyzes the phosphorolysis of single-stranded polyribonucleotides processively in the 3'- to 5'-direction. The polypeptide is Polyribonucleotide nucleotidyltransferase (Chlamydia abortus (strain DSM 27085 / S26/3) (Chlamydophila abortus)).